Reading from the N-terminus, the 110-residue chain is Thiosulfate sulfurtransferase GlpE (110 aa).

The Rhodanese domain occupies 19–107; it reads EDSLAVLVDI…WRRQALPIIQ (89 aa). C67 serves as the catalytic Cysteine persulfide intermediate.

Belongs to the GlpE family.

Its subcellular location is the cytoplasm. It carries out the reaction thiosulfate + hydrogen cyanide = thiocyanate + sulfite + 2 H(+). It catalyses the reaction thiosulfate + [thioredoxin]-dithiol = [thioredoxin]-disulfide + hydrogen sulfide + sulfite + 2 H(+). In terms of biological role, transferase that catalyzes the transfer of sulfur from thiosulfate to thiophilic acceptors such as cyanide or dithiols. May function in a CysM-independent thiosulfate assimilation pathway by catalyzing the conversion of thiosulfate to sulfite, which can then be used for L-cysteine biosynthesis. This Photobacterium profundum (strain SS9) protein is Thiosulfate sulfurtransferase GlpE.